The primary structure comprises 552 residues: Esterase E4 (552 aa).

A signal peptide spans 1 to 23 (MKNTCGILLNLFLFIGCFLTCSA). Asn-81 is a glycosylation site (N-linked (GlcNAc...) asparagine). Cys-89 and Cys-106 are joined by a disulfide. Ser-214 (acyl-ester intermediate) is an active-site residue. Cys-266 and Cys-277 are joined by a disulfide. The N-linked (GlcNAc...) asparagine glycan is linked to Asn-269. The Charge relay system role is filled by Glu-339. N-linked (GlcNAc...) asparagine glycosylation is found at Asn-371, Asn-404, and Asn-443. His-463 functions as the Charge relay system in the catalytic mechanism.

It belongs to the type-B carboxylesterase/lipase family.

The catalysed reaction is a carboxylic ester + H2O = an alcohol + a carboxylate + H(+). Overproduction of nonspecific esterases is a common mechanism of resistance to organophosphate insecticides. This chain is Esterase E4, found in Myzus persicae (Green peach aphid).